The sequence spans 255 residues: Proteasome subunit alpha 2 (255 aa).

Residues 229 to 255 (AGSSLEEMLPTPAATEDAPPANGDAPS) form a disordered region. Over residues 238 to 249 (PTPAATEDAPPA) the composition is skewed to low complexity.

This sequence belongs to the peptidase T1A family. As to quaternary structure, the 20S proteasome core is composed of 14 alpha and 14 beta subunits that assemble into four stacked heptameric rings, resulting in a barrel-shaped structure. The two inner rings, each composed of seven catalytic beta subunits, are sandwiched by two outer rings, each composed of seven alpha subunits. All four combinations of alpha- and beta-subunits (beta2-alpha1, beta2-alpha2, beta1-alpha2 and beta1-alpha1) yield fully assembled and proteolytically active proteasomes. The catalytic chamber with the active sites is on the inside of the barrel. Has probably a gated structure, the ends of the cylinder being occluded by the N-termini of the alpha-subunits. Is likely capped by the proteasome-associated ATPase, ARC. The N-terminus is blocked.

The protein localises to the cytoplasm. It participates in protein degradation; proteasomal Pup-dependent pathway. Its activity is regulated as follows. The formation of the proteasomal ATPase ARC-20S proteasome complex, likely via the docking of the C-termini of ARC into the intersubunit pockets in the alpha-rings, may trigger opening of the gate for substrate entry. Interconversion between the open-gate and close-gate conformations leads to a dynamic regulation of the 20S proteasome proteolysis activity. Component of the proteasome core, a large protease complex with broad specificity involved in protein degradation. The R.erythropolis proteasomes are able to cleave oligopeptides after Tyr, Phe and Leu, very poorly after Arg but not after Glu. Thus, displays chymotrypsin-like activity, low trypsin-like activity but no caspase-like activity. This is Proteasome subunit alpha 2 from Rhodococcus erythropolis (Arthrobacter picolinophilus).